The chain runs to 427 residues: Serine--tRNA ligase (427 aa).

230-232 (TAE) contributes to the L-serine binding site. Residue 261–263 (RAE) coordinates ATP. Glu-284 contributes to the L-serine binding site. 348–351 (EISS) is an ATP binding site. Residue Ser-384 participates in L-serine binding.

The protein belongs to the class-II aminoacyl-tRNA synthetase family. Type-1 seryl-tRNA synthetase subfamily. Homodimer. The tRNA molecule binds across the dimer.

Its subcellular location is the cytoplasm. The catalysed reaction is tRNA(Ser) + L-serine + ATP = L-seryl-tRNA(Ser) + AMP + diphosphate + H(+). It catalyses the reaction tRNA(Sec) + L-serine + ATP = L-seryl-tRNA(Sec) + AMP + diphosphate + H(+). The protein operates within aminoacyl-tRNA biosynthesis; selenocysteinyl-tRNA(Sec) biosynthesis; L-seryl-tRNA(Sec) from L-serine and tRNA(Sec): step 1/1. Catalyzes the attachment of serine to tRNA(Ser). Is also able to aminoacylate tRNA(Sec) with serine, to form the misacylated tRNA L-seryl-tRNA(Sec), which will be further converted into selenocysteinyl-tRNA(Sec). The sequence is that of Serine--tRNA ligase from Moorella thermoacetica (strain ATCC 39073 / JCM 9320).